We begin with the raw amino-acid sequence, 323 residues long: Tyrosine recombinase XerD (323 aa).

The 86-residue stretch at 21–106 (AEDDQAIQRF…TLRGFYALCL (86 aa)) folds into the Core-binding (CB) domain. In terms of domain architecture, Tyr recombinase spans 127 to 317 (SLPKALTESQ…ARQHLQTLHA (191 aa)). Catalysis depends on residues Arg-167, Lys-191, His-269, Arg-272, and His-295. Tyr-304 (O-(3'-phospho-DNA)-tyrosine intermediate) is an active-site residue.

Belongs to the 'phage' integrase family. XerD subfamily. Forms a cyclic heterotetrameric complex composed of two molecules of XerC and two molecules of XerD.

It is found in the cytoplasm. Functionally, site-specific tyrosine recombinase, which acts by catalyzing the cutting and rejoining of the recombining DNA molecules. The XerC-XerD complex is essential to convert dimers of the bacterial chromosome into monomers to permit their segregation at cell division. It also contributes to the segregational stability of plasmids. This is Tyrosine recombinase XerD from Xanthomonas campestris pv. campestris (strain ATCC 33913 / DSM 3586 / NCPPB 528 / LMG 568 / P 25).